The following is a 400-amino-acid chain: Serpin E3 (400 aa).

A signal peptide spans 1 to 19 (MQSLLLALLLLPVCSPGGA). The N-linked (GlcNAc...) asparagine glycan is linked to Asn-46.

Belongs to the serpin family.

Its subcellular location is the secreted. Its function is as follows. Probable serine protease inhibitor. This is Serpin E3 (SERPINE3) from Bos taurus (Bovine).